Reading from the N-terminus, the 337-residue chain is Lipoyl synthase (337 aa).

7 residues coordinate [4Fe-4S] cluster: cysteine 81, cysteine 86, cysteine 92, cysteine 107, cysteine 111, cysteine 114, and serine 323. The region spanning phenylalanine 93–serine 312 is the Radical SAM core domain.

The protein belongs to the radical SAM superfamily. Lipoyl synthase family. Requires [4Fe-4S] cluster as cofactor.

It localises to the cytoplasm. The enzyme catalyses [[Fe-S] cluster scaffold protein carrying a second [4Fe-4S](2+) cluster] + N(6)-octanoyl-L-lysyl-[protein] + 2 oxidized [2Fe-2S]-[ferredoxin] + 2 S-adenosyl-L-methionine + 4 H(+) = [[Fe-S] cluster scaffold protein] + N(6)-[(R)-dihydrolipoyl]-L-lysyl-[protein] + 4 Fe(3+) + 2 hydrogen sulfide + 2 5'-deoxyadenosine + 2 L-methionine + 2 reduced [2Fe-2S]-[ferredoxin]. The protein operates within protein modification; protein lipoylation via endogenous pathway; protein N(6)-(lipoyl)lysine from octanoyl-[acyl-carrier-protein]: step 2/2. Its function is as follows. Catalyzes the radical-mediated insertion of two sulfur atoms into the C-6 and C-8 positions of the octanoyl moiety bound to the lipoyl domains of lipoate-dependent enzymes, thereby converting the octanoylated domains into lipoylated derivatives. The sequence is that of Lipoyl synthase from Xanthomonas euvesicatoria pv. vesicatoria (strain 85-10) (Xanthomonas campestris pv. vesicatoria).